The chain runs to 59 residues: MEAMKMRLFVAVLVAAMAFSAVQQAAAVEAPAPSPTSDASLAIPAFFASVATLAFGFLF.

Positions 1-27 (MEAMKMRLFVAVLVAAMAFSAVQQAAA) are cleaved as a signal peptide. A 4-hydroxyproline mark is found at proline 31, proline 33, and proline 35. Residues proline 31, proline 33, and proline 35 are each glycosylated (O-linked (Ara...) hydroxyproline). Serine 37 carries the GPI-anchor amidated serine lipid modification. The propeptide at 38–59 (DASLAIPAFFASVATLAFGFLF) is removed in mature form.

The protein belongs to the AG-peptide AGP family. In terms of processing, contains 4-hydroxyproline; hydroxylated on Pro-31, Pro-33 and Pro-35. O-glycosylated on hydroxyprolines; noncontiguous hydroxylproline residues are glycosylated with arabinogalactan.

Its subcellular location is the cell membrane. In terms of biological role, proteoglycan that seems to be implicated in diverse developmental roles such as differentiation, cell-cell recognition, embryogenesis and programmed cell death. This chain is Arabinogalactan protein 13, found in Arabidopsis thaliana (Mouse-ear cress).